The chain runs to 219 residues: Octanoyltransferase (219 aa).

One can recognise a BPL/LPL catalytic domain in the interval 32–207; that stretch reads ASSPDQLWIV…TFSHNLGYQN (176 aa). Residues 71 to 78, 138 to 140, and 151 to 153 contribute to the substrate site; these read RGGQVTYH, SLG, and GLA. Cys169 serves as the catalytic Acyl-thioester intermediate.

Belongs to the LipB family.

It localises to the cytoplasm. It carries out the reaction octanoyl-[ACP] + L-lysyl-[protein] = N(6)-octanoyl-L-lysyl-[protein] + holo-[ACP] + H(+). It functions in the pathway protein modification; protein lipoylation via endogenous pathway; protein N(6)-(lipoyl)lysine from octanoyl-[acyl-carrier-protein]: step 1/2. Catalyzes the transfer of endogenously produced octanoic acid from octanoyl-acyl-carrier-protein onto the lipoyl domains of lipoate-dependent enzymes. Lipoyl-ACP can also act as a substrate although octanoyl-ACP is likely to be the physiological substrate. This is Octanoyltransferase from Shewanella sediminis (strain HAW-EB3).